We begin with the raw amino-acid sequence, 80 residues long: uncharacterized protein (80 aa).

This is an uncharacterized protein from Vaccinia virus (strain Copenhagen) (VACV).